The chain runs to 618 residues: Proline--tRNA ligase (618 aa).

This sequence belongs to the class-II aminoacyl-tRNA synthetase family. ProS type 1 subfamily. As to quaternary structure, homodimer.

It localises to the cytoplasm. It catalyses the reaction tRNA(Pro) + L-proline + ATP = L-prolyl-tRNA(Pro) + AMP + diphosphate. Its function is as follows. Catalyzes the attachment of proline to tRNA(Pro) in a two-step reaction: proline is first activated by ATP to form Pro-AMP and then transferred to the acceptor end of tRNA(Pro). As ProRS can inadvertently accommodate and process non-cognate amino acids such as alanine and cysteine, to avoid such errors it has two additional distinct editing activities against alanine. One activity is designated as 'pretransfer' editing and involves the tRNA(Pro)-independent hydrolysis of activated Ala-AMP. The other activity is designated 'posttransfer' editing and involves deacylation of mischarged Ala-tRNA(Pro). The misacylated Cys-tRNA(Pro) is not edited by ProRS. In Streptococcus pyogenes serotype M4 (strain MGAS10750), this protein is Proline--tRNA ligase.